The primary structure comprises 64 residues: MKLLVYPLFTNVINNCGLRLKKSTNRKPKIHICFLFAEAVPITSNFDFQECLFFDSYLDLVRSV.

The protein localises to the mitochondrion. This is an uncharacterized protein from Marchantia polymorpha (Common liverwort).